The following is a 474-amino-acid chain: Mercuric reductase (474 aa).

3 residues coordinate FAD: A19, G39, and T44. C45 and C50 are oxidised to a cystine. FAD-binding residues include K54, A119, D315, and V323. The Hg(2+) site is built by C471 and C472.

Belongs to the class-I pyridine nucleotide-disulfide oxidoreductase family. In terms of assembly, homodimer. It depends on FAD as a cofactor.

It catalyses the reaction Hg + NADP(+) + H(+) = Hg(2+) + NADPH. Resistance to Hg(2+) in bacteria appears to be governed by a specialized system which includes mercuric reductase. MerA protein is responsible for volatilizing mercury as Hg(0). This Streptomyces lividans protein is Mercuric reductase (merA).